Here is an 880-residue protein sequence, read N- to C-terminus: Chaperone protein ClpB 1 (880 aa).

The Clp R domain occupies 6–148; sequence PNKFTDKAWE…EASIKAVRGS (143 aa). 2 repeat regions span residues 9-74 and 85-148; these read FTDK…TQRQ and LGRS…VRGS. The segment at 161 to 343 is NBD1; it reads EALQKFGRDL…RRFQQVYVDQ (183 aa). An ATP-binding site is contributed by 208–215; sequence GEPGVGKT. The segment at 344–554 is linker; that stretch reads PSVENTISIL…IAEIVAKWTG (211 aa). The stretch at 394 to 530 forms a coiled coil; the sequence is IDLVDEAAAQ…KEAKLLELQS (137 aa). An NBD2 region spans residues 564–775; sequence ERQKLLQLES…RVDDTILFHA (212 aa). 614 to 621 contacts ATP; the sequence is GPTGVGKT. Residues 776–880 form a C-terminal region; that stretch reads LSRSEMSHII…VKVSVTQITT (105 aa).

The protein belongs to the ClpA/ClpB family. In terms of assembly, homohexamer. The oligomerization is ATP-dependent.

The protein resides in the cytoplasm. Functionally, part of a stress-induced multi-chaperone system, it is involved in the recovery of the cell from heat-induced damage, in cooperation with DnaK, DnaJ and GrpE. Acts before DnaK, in the processing of protein aggregates. Protein binding stimulates the ATPase activity; ATP hydrolysis unfolds the denatured protein aggregates, which probably helps expose new hydrophobic binding sites on the surface of ClpB-bound aggregates, contributing to the solubilization and refolding of denatured protein aggregates by DnaK. This is Chaperone protein ClpB 1 (clpB1) from Nostoc sp. (strain PCC 7120 / SAG 25.82 / UTEX 2576).